Reading from the N-terminus, the 366-residue chain is tRNA/tmRNA (uracil-C(5))-methyltransferase (366 aa).

S-adenosyl-L-methionine is bound by residues Q190, Y218, N223, E239, and D299. C324 (nucleophile) is an active-site residue. E358 functions as the Proton acceptor in the catalytic mechanism.

Belongs to the class I-like SAM-binding methyltransferase superfamily. RNA M5U methyltransferase family. TrmA subfamily.

The enzyme catalyses uridine(54) in tRNA + S-adenosyl-L-methionine = 5-methyluridine(54) in tRNA + S-adenosyl-L-homocysteine + H(+). It catalyses the reaction uridine(341) in tmRNA + S-adenosyl-L-methionine = 5-methyluridine(341) in tmRNA + S-adenosyl-L-homocysteine + H(+). In terms of biological role, dual-specificity methyltransferase that catalyzes the formation of 5-methyluridine at position 54 (m5U54) in all tRNAs, and that of position 341 (m5U341) in tmRNA (transfer-mRNA). In Salmonella agona (strain SL483), this protein is tRNA/tmRNA (uracil-C(5))-methyltransferase.